We begin with the raw amino-acid sequence, 33 residues long: Thrombin-like enzyme RP34 (33 aa).

In terms of domain architecture, Peptidase S1 spans 1-33; sequence VIGGDEXDINEHRSLALMYXSWSHRFIXXGXLI.

It belongs to the peptidase S1 family. Snake venom subfamily. Homodimer. Expressed by the venom gland.

It localises to the secreted. The enzyme catalyses Selective cleavage of Arg-|-Xaa bond in fibrinogen, to form fibrin, and release fibrinopeptide A. The specificity of further degradation of fibrinogen varies with species origin of the enzyme.. Functionally, thrombin-like snake venom serine protease that displays clotting activity on fibrinogen. Shows both arginine-ester hydrolase and amidase activities on synthetic substrates. Also shows proteolytic activity toward casein. The sequence is that of Thrombin-like enzyme RP34 from Cerastes cerastes (Horned desert viper).